The following is a 216-amino-acid chain: Ribonuclease HII (216 aa).

The RNase H type-2 domain maps to 27–216; sequence ASLAGVDEAG…VKEHVKNCEG (190 aa). Positions 33, 34, and 125 each coordinate a divalent metal cation.

This sequence belongs to the RNase HII family. It depends on Mn(2+) as a cofactor. The cofactor is Mg(2+).

It is found in the cytoplasm. The enzyme catalyses Endonucleolytic cleavage to 5'-phosphomonoester.. Endonuclease that specifically degrades the RNA of RNA-DNA hybrids. This is Ribonuclease HII from Geotalea daltonii (strain DSM 22248 / JCM 15807 / FRC-32) (Geobacter daltonii).